The following is a 287-amino-acid chain: ATP synthase gamma chain (287 aa).

It belongs to the ATPase gamma chain family. As to quaternary structure, F-type ATPases have 2 components, CF(1) - the catalytic core - and CF(0) - the membrane proton channel. CF(1) has five subunits: alpha(3), beta(3), gamma(1), delta(1), epsilon(1). CF(0) has three main subunits: a, b and c.

The protein resides in the cell inner membrane. Its function is as follows. Produces ATP from ADP in the presence of a proton gradient across the membrane. The gamma chain is believed to be important in regulating ATPase activity and the flow of protons through the CF(0) complex. The protein is ATP synthase gamma chain of Citrobacter koseri (strain ATCC BAA-895 / CDC 4225-83 / SGSC4696).